Consider the following 720-residue polypeptide: Cyclic nucleotide-gated ion channel 17 (720 aa).

At Met-1–Val-85 the chain is on the cytoplasmic side. A helical membrane pass occupies residues Phe-86–Ile-106. At Gly-107 to Leu-121 the chain is on the extracellular side. The chain crosses the membrane as a helical span at residues Ser-122 to Ile-142. Topologically, residues Lys-143–Asp-178 are cytoplasmic. Residues Phe-179–Ser-199 form a helical membrane-spanning segment. Residues Thr-200–Asn-211 lie on the Extracellular side of the membrane. The helical transmembrane segment at Ala-212–Ser-232 threads the bilayer. The Cytoplasmic segment spans residues Ser-233–Tyr-252. Residues Asn-253–Val-273 traverse the membrane as a helical segment. Residues Asp-274 to Thr-377 are Extracellular-facing. Residues Thr-378–Met-398 form a helical membrane-spanning segment. At Gln-399–Asp-720 the chain is on the cytoplasmic side. A nucleoside 3',5'-cyclic phosphate contacts are provided by residues Phe-481 to Leu-605 and Glu-552. The calmodulin-binding stretch occupies residues Phe-597–Tyr-612. Residues Arg-617–Met-646 enclose the IQ domain.

It belongs to the cyclic nucleotide-gated cation channel (TC 1.A.1.5) family. As to quaternary structure, homotetramer or heterotetramer. Part of a functional complex containing PSKR1, BAK1, CNGC17, and AHA. Interacts with AHA1, AHA2, and BAK1, but not with PSKR1 or BRI1.

The protein resides in the cell membrane. Probable cyclic nucleotide-gated ion channel. Forms a functional cation-translocating unit with AHAs that is activated by PSKR1/BAK1 and possibly other BAK1/RLK complexes. Required for PSK-induced protoplast expansion. This chain is Cyclic nucleotide-gated ion channel 17, found in Arabidopsis thaliana (Mouse-ear cress).